We begin with the raw amino-acid sequence, 475 residues long: MSSLLKTDFNVSKYRLIAQKREANAVEIEAALEVVREFIIKKKLILYGGIAIDYALHLKGSSIYPEGERPDFDMFSPNHVEDAYELADILYEKGFKQVGTVRAIHVQTMRVRTDFVWVADLSYMPPNIFDTIPTLTYKNLKIIHPDYQRAGLHLAFCFPFDNPPREDVFSRFKKDLQRYNLIEKYYPIPVVPVKSTYESKTFSIPFKQVAIHGFAAYALLYQTLNELRITCKVPEWKTEFPQPSYSYHKNDKNITLTVDMPRAYPALVLATYNPEGVIKEMGLHLTEICEPYMDYSPPIFKTNDIHFFSTMFKELAISIIQDNLIVVSPQYLLLYFLYGAFATPADKSLFLFYYNATLWILEKADSLLNIIQKQTSPEEFTRFANTSPFVLTTRVLSCSQERCTFSPAYRISLANDVQQSQLPLPKTHFLSNSLPDISTLPYNYYPGKGKEKPTNFNYEKNLLFNIGGKCTPSAM.

Belongs to the poxviridae poly(A) polymerase catalytic subunit family. Highly divergent.

The protein resides in the virion. It carries out the reaction RNA(n) + ATP = RNA(n)-3'-adenine ribonucleotide + diphosphate. Functionally, polymerase that creates the 3'-poly(A) tail of mRNA's. This African swine fever virus (isolate Tick/South Africa/Pretoriuskop Pr4/1996) (ASFV) protein is Putative poly(A) polymerase catalytic subunit.